The chain runs to 599 residues: mRNA export factor MEX67 (599 aa).

Ser2 bears the N-acetylserine mark. 2 LRR repeats span residues 163 to 184 (IVES…STLA) and 189 to 210 (NLKN…EVWK). An LRRCT domain is found at 224–262 (NPITTDKLYRTEMLRLFPKLVVLDNVIVRDEQKLQTVYS). The NTF2 domain maps to 280–467 (SSTDFATNFL…VIIASDLLTV (188 aa)). The disordered stretch occupies residues 408-439 (KPELESNKKTGKNNYQKNRRYNHGYNSTSNNK). Residues 546-599 (PVQLELLNKLHLETKLNAEYTFMLAEQSNWNYEVAIKGFQSSMNGIPREAFVQF) form the TAP-C domain.

It belongs to the NXF family. As to quaternary structure, interacts with nucleoporin complex NUP84 and MTR2. Interacts with MIP6.

The protein localises to the nucleus. It localises to the cytoplasm. Functionally, involved in the export of mRNA from the nucleus to the cytoplasm. The sequence is that of mRNA export factor MEX67 (MEX67) from Saccharomyces cerevisiae (strain ATCC 204508 / S288c) (Baker's yeast).